The chain runs to 353 residues: DNA-directed RNA polymerase subunit alpha (353 aa).

Residues 1 to 245 are alpha N-terminal domain (alpha-NTD); that stretch reads MEKIQKITYK…AHFQIIGNIN (245 aa). The segment at 261–353 is alpha C-terminal domain (alpha-CTD); the sequence is EREIKSTTPI…QLNNSEEGEE (93 aa).

It belongs to the RNA polymerase alpha chain family. Homodimer. The RNAP catalytic core consists of 2 alpha, 1 beta, 1 beta' and 1 omega subunit. When a sigma factor is associated with the core the holoenzyme is formed, which can initiate transcription.

It carries out the reaction RNA(n) + a ribonucleoside 5'-triphosphate = RNA(n+1) + diphosphate. DNA-dependent RNA polymerase catalyzes the transcription of DNA into RNA using the four ribonucleoside triphosphates as substrates. In Mycoplasma sp, this protein is DNA-directed RNA polymerase subunit alpha.